A 258-amino-acid polypeptide reads, in one-letter code: MGVEKIKAAFENGKKAFIPYVMGGDGGFEKLKERIRFLDEAGASIVEIGIPFSDPVADGPTIQRAGKRALDSGVTVKGIFQALIEVRKEVQIPFVLMTYLNPVLAFGKERFIENCIEAGVDGIIVPDLPYEEQNIIASLLREVNIALIPLVTVTSPIERIEKITSESEGFVYAVTVAGVTGVRQNFKEEIHSYLEKVKSHVNLPVVAGFGISTKEHVEEMVTICDGVVVGSKVIELLENEKREEICELIYATKQKEEA.

Catalysis depends on proton acceptor residues glutamate 47 and aspartate 58.

The protein belongs to the TrpA family. Tetramer of two alpha and two beta chains.

It catalyses the reaction (1S,2R)-1-C-(indol-3-yl)glycerol 3-phosphate + L-serine = D-glyceraldehyde 3-phosphate + L-tryptophan + H2O. It participates in amino-acid biosynthesis; L-tryptophan biosynthesis; L-tryptophan from chorismate: step 5/5. Functionally, the alpha subunit is responsible for the aldol cleavage of indoleglycerol phosphate to indole and glyceraldehyde 3-phosphate. This chain is Tryptophan synthase alpha chain, found in Bacillus cereus (strain B4264).